Reading from the N-terminus, the 163-residue chain is Shikimate kinase (163 aa).

Residue 10–15 (GVGKTT) participates in ATP binding. A Mg(2+)-binding site is contributed by Thr14. Substrate is bound by residues Asp28, Arg52, and Gly75. Arg116 contacts ATP. Arg134 serves as a coordination point for substrate.

Belongs to the shikimate kinase family. In terms of assembly, monomer. It depends on Mg(2+) as a cofactor.

The protein localises to the cytoplasm. It carries out the reaction shikimate + ATP = 3-phosphoshikimate + ADP + H(+). It participates in metabolic intermediate biosynthesis; chorismate biosynthesis; chorismate from D-erythrose 4-phosphate and phosphoenolpyruvate: step 5/7. Catalyzes the specific phosphorylation of the 3-hydroxyl group of shikimic acid using ATP as a cosubstrate. The sequence is that of Shikimate kinase from Streptococcus suis (strain 98HAH33).